Reading from the N-terminus, the 274-residue chain is tRNA (guanine-N(1)-)-methyltransferase (274 aa).

Residues Gly116 and 140-145 each bind S-adenosyl-L-methionine; that span reads LGDYVL.

The protein belongs to the RNA methyltransferase TrmD family. In terms of assembly, homodimer.

It localises to the cytoplasm. The catalysed reaction is guanosine(37) in tRNA + S-adenosyl-L-methionine = N(1)-methylguanosine(37) in tRNA + S-adenosyl-L-homocysteine + H(+). Functionally, specifically methylates guanosine-37 in various tRNAs. The protein is tRNA (guanine-N(1)-)-methyltransferase of Arthrobacter sp. (strain FB24).